A 251-amino-acid polypeptide reads, in one-letter code: Probable transcriptional regulatory protein Swol_1435 (251 aa).

The segment at 1 to 23 (MAGHSKWANIKHKKARSDEKRGK) is disordered.

Belongs to the TACO1 family.

Its subcellular location is the cytoplasm. This is Probable transcriptional regulatory protein Swol_1435 from Syntrophomonas wolfei subsp. wolfei (strain DSM 2245B / Goettingen).